The sequence spans 433 residues: Epi-neemfruitin B synthase L1AT (433 aa).

Catalysis depends on proton acceptor residues H151 and D372.

This sequence belongs to the plant acyltransferase family. In terms of assembly, monomer. Mainly expressed in petioles and, to a lower extent, in roots.

It catalyses the reaction (21S)-21-acetyl-1-hydroxy-apo-melianone + acetyl-CoA = epi-neemfruitin B + acetate + CoA + H(+). The protein operates within secondary metabolite biosynthesis; terpenoid biosynthesis. Acetyltransferase involved in the biosynthesis of limonoids triterpene natural products such as azadirachtin, an antifeedant widely used as bioinsecticide, and possessing many medicinal applications including anti-tumoral, anti-malarial, anti-rheumatic, antibacterial, anti-inflammatory, anti-pyretic and diuretic effects. Catalyzes the formation of epi-neemfruitin B from (21S)-21-acetyl-1-hydroxy-apo-melianone. This Melia azedarach (Chinaberry tree) protein is Epi-neemfruitin B synthase L1AT.